A 456-amino-acid polypeptide reads, in one-letter code: MEPRCPPPCGCCERLVLNVAGLRFETRARTLGRFPDTLLGDPARRGRFYDDARREYFFDRHRPSFDAVLYYYQSGGRLRRPAHVPLDVFLEEVAFYGLGAAALARLREDEGCPVPPERPLPRRAFARQLWLLFEFPESSQAARVLAVVSVLVILVSIVVFCLETLPDFRDDRDGTGLAAAAAAGPFPAPLNGSSQMPGNPPRLPFNDPFFVVETLCICWFSFELLVRLLVCPSKAIFFKNVMNLIDFVAILPYFVALGTELARQRGVGQQAMSLAILRVIRLVRVFRIFKLSRHSKGLQILGQTLRASMRELGLLIFFLFIGVVLFSSAVYFAEVDRVDSHFTSIPESFWWAVVTMTTVGYGDMAPVTVGGKIVGSLCAIAGVLTISLPVPVIVSNFSYFYHRETEGEEAGMFSHVDMQPCGPLEGKANGGLVDGEVPELPPPLWAPPGKHLVTEV.

The helical transmembrane segment at 144–164 (VLAVVSVLVILVSIVVFCLET) threads the bilayer. N-linked (GlcNAc...) asparagine glycosylation is present at Asn191. The chain crosses the membrane as a helical span at residues 209–229 (FFVVETLCICWFSFELLVRLL). Cys231 carries the S-palmitoyl cysteine lipid modification. Residues 241 to 261 (VMNLIDFVAILPYFVALGTEL) traverse the membrane as a helical segment. A helical; Voltage-sensor transmembrane segment spans residues 276 to 295 (ILRVIRLVRVFRIFKLSRHS). Residues 312 to 332 (LGLLIFFLFIGVVLFSSAVYF) form a helical membrane-spanning segment. Residues 358 to 363 (TVGYGD) carry the Selectivity filter motif. Residues 373–393 (IVGSLCAIAGVLTISLPVPVI) form a helical membrane-spanning segment.

The protein belongs to the potassium channel family. A (Shaker) (TC 1.A.1.2) subfamily. Kv1.7/KCNA7 sub-subfamily. As to quaternary structure, heterotetramer of potassium channel proteins. In terms of tissue distribution, highly expressed in skeletal muscle, heart and kidney.

The protein resides in the membrane. It catalyses the reaction K(+)(in) = K(+)(out). Mediates the voltage-dependent potassium ion permeability of excitable membranes. Assuming opened or closed conformations in response to the voltage difference across the membrane, the protein forms a potassium-selective channel through which potassium ions may pass in accordance with their electrochemical gradient. The sequence is that of Potassium voltage-gated channel subfamily A member 7 (KCNA7) from Homo sapiens (Human).